Consider the following 1379-residue polypeptide: Partitioning defective protein 3 (1379 aa).

The segment covering 1–23 (MSASSTSSSSTSCPEGGEPSGSC) has biased composition (low complexity). Disordered regions lie at residues 1-32 (MSAS…GEST) and 208-335 (YNVG…SDRK). Polar residues-rich tracts occupy residues 239–256 (SFDQ…PKPS) and 272–284 (ILRS…ASGS). Basic and acidic residues-rich tracts occupy residues 302 to 315 (EVEK…ERKS) and 322 to 335 (DKNP…SDRK). 2 PDZ domains span residues 381–483 (LVTF…IINR) and 515–599 (VVEL…SRVS). Residues 606 to 626 (TSASSENKENEETLKVVEEEK) are a coiled coil. A PDZ 3 domain is found at 659–750 (VIPFINGSSS…EVGMISSNVR (92 aa)). Disordered stretches follow at residues 767–873 (DLSR…MGAA), 887–918 (HQRQ…RSPM), 949–1085 (QSME…GGNV), 1273–1301 (VEPV…SGSS), and 1350–1379 (AYET…FPQY). Low complexity-rich tracts occupy residues 776 to 786 (SSPSPSSRMSS) and 798 to 826 (ATRG…AVPA). Composition is skewed to basic and acidic residues over residues 828–844 (LTER…RNDE) and 854–869 (FNRE…EKRG). The span at 894-912 (PTSSTQKRSKSQPRSSSQR) shows a compositional bias: low complexity. Positions 967–977 (QIPTGSSSKVQ) are enriched in polar residues. Composition is skewed to basic and acidic residues over residues 1030–1040 (KSRDASPEKTP) and 1048–1060 (SVER…DERN). Positions 1290–1301 (STSSGAVASGSS) are enriched in low complexity.

This sequence belongs to the PAR3 family. Required, together with pkc-3, for the localization of par-6; par-6 is involved in localizing/maintaining par-3 at the cell periphery. Interacts with par-6 and pkc-3 for localization at the periphery of anterior cortex of the embryo. Asymmetrically distributed at the periphery of the zygote and in dividing blastomeres of the germline lineage. Coexpressed with par-6; patchy expression observed at the periphery after completion of meiosis I and in meiosis II. On completion of metaphase II, expression is restricted to the anterior 85% of embryo length; this decreases to 55% in embryos between prophase and telophase of the first mitosis. During the first cleavage, expression is detected in the advancing furrow. Transiently coexpressed and colocalized asymmetrically with par-6 and pkc-3, in the developing somatic gonad, including the spermathecal precursor cells of L4 larvae.

The protein localises to the cytoplasm. Functionally, in cooperation with pkc-3, required for establishing cell polarity and regulating spindle orientation in the early embryo. Localization is crucial for recruiting par-6 and pkc-3 to the peripheral apical cortex and restricting par-2 to basolateral surfaces. Necessary for apicobasal and anterior-posterior asymmetries associated with cell adhesion and gastrulation during the first few cycles of embryogenesis, and also for epithelial cell polarity in the distal spermatheca. Regulates the asymmetric localization of csnk-1, ppk-1 and gpr-1/2 during the first embryonic division. This is Partitioning defective protein 3 from Caenorhabditis elegans.